The following is a 1520-amino-acid chain: Integrator complex subunit 3 homolog (1520 aa).

6 disordered regions span residues 1 to 23, 523 to 671, 689 to 801, 813 to 922, 1116 to 1177, and 1489 to 1520; these read MMNQ…QQLT, QLHS…NSRV, VISQ…SPST, DEPP…QNIK, FSNS…NITN, and QSSN…FRKE. Low complexity-rich tracts occupy residues 527–549 and 557–595; these read QQQQ…QQPP and QPIN…QQQP. Residues 596–612 show a composition bias toward pro residues; the sequence is PQQPPPQQQPQQQPPQQ. Low complexity predominate over residues 613–625; sequence QPQQQPQQQQPQL. Over residues 626-639 the composition is skewed to polar residues; it reads NISTGNLPNIQQPM. Composition is skewed to low complexity over residues 642–669, 694–717, and 725–735; these read SPPL…TNNS, PQSQ…SPPL, and QQQPSQQLPSQ. Positions 736–752 are enriched in polar residues; it reads IVKNSPPNLSMTNENIS. Positions 768 to 789 are enriched in low complexity; the sequence is SPLINSSNSNITTPNPDSQSQI. Polar residues predominate over residues 819 to 828; it reads SKSSPTQSNI. Residues 837–882 are compositionally biased toward low complexity; it reads PPQTTISSSSPLLQPQTQPQPQTQPQPQTLQQSTTPSLSSSSTPTI. Positions 898–918 are enriched in pro residues; that stretch reads QPPPPPPSSQPLQPPPPPPPS. Low complexity-rich tracts occupy residues 1116–1130 and 1137–1177; these read FSNS…NNNN and QQQQ…NITN. Residues 1489-1504 are compositionally biased toward polar residues; it reads QSSNIKNDNNPTLSKH.

It belongs to the Integrator subunit 3 family. In terms of assembly, component of the Integrator complex. The core complex associates with protein phosphatase 2A subunits, to form the Integrator-PP2A (INTAC) complex. Component of the SOSS complex.

Its subcellular location is the nucleus. It is found in the cytoplasm. Its function is as follows. Component of the integrator complex, a multiprotein complex that terminates RNA polymerase II (Pol II) transcription in the promoter-proximal region of genes. The integrator complex provides a quality checkpoint during transcription elongation by driving premature transcription termination of transcripts that are unfavorably configured for transcriptional elongation: the complex terminates transcription by (1) catalyzing dephosphorylation of the C-terminal domain (CTD) of Pol II subunit polr2a, (2) degrading the exiting nascent RNA transcript via endonuclease activity and (3) promoting the release of Pol II from bound DNA. The integrator complex is also involved in terminating the synthesis of non-coding Pol II transcripts, such as enhancer RNAs (eRNAs), small nuclear RNAs (snRNAs), telomerase RNAs and long non-coding RNAs (lncRNAs). Component of the SOSS complex, a multiprotein complex that functions downstream of the MRN complex to promote DNA repair and G2/M checkpoint. The SOSS complex associates with single-stranded DNA at DNA lesions and influences diverse endpoints in the cellular DNA damage response including cell-cycle checkpoint activation, recombinational repair and maintenance of genomic stability. The SOSS complex is required for efficient homologous recombination-dependent repair of double-strand breaks (DSBs) and ATM-dependent signaling pathways. In the SOSS complex, it is required for the assembly of the complex and for stabilization of the complex at DNA damage sites. In Dictyostelium discoideum (Social amoeba), this protein is Integrator complex subunit 3 homolog (ints3).